Consider the following 212-residue polypeptide: Uridine kinase (212 aa).

12 to 19 (GGSGGGKT) is an ATP binding site.

Belongs to the uridine kinase family.

It is found in the cytoplasm. The enzyme catalyses uridine + ATP = UMP + ADP + H(+). It catalyses the reaction cytidine + ATP = CMP + ADP + H(+). It participates in pyrimidine metabolism; CTP biosynthesis via salvage pathway; CTP from cytidine: step 1/3. Its pathway is pyrimidine metabolism; UMP biosynthesis via salvage pathway; UMP from uridine: step 1/1. In Streptococcus pneumoniae serotype 2 (strain D39 / NCTC 7466), this protein is Uridine kinase.